The primary structure comprises 177 residues: Probable DNA-directed RNA polymerase subunit delta (177 aa).

The HTH HARE-type domain maps to 14-81 (CSMIEVVHSV…GENRWGLRSW (68 aa)). Positions 93–177 (PQPKPKKKRK…ETEEEEEEEL (85 aa)) are disordered. Residues 106-177 (DGFDDYIEED…ETEEEEEEEL (72 aa)) show a composition bias toward acidic residues.

It belongs to the RpoE family. As to quaternary structure, RNAP is composed of a core of 2 alpha, a beta and a beta' subunits. The core is associated with a delta subunit and one of several sigma factors.

Functionally, participates in both the initiation and recycling phases of transcription. In the presence of the delta subunit, RNAP displays an increased specificity of transcription, a decreased affinity for nucleic acids, and an increased efficiency of RNA synthesis because of enhanced recycling. The protein is Probable DNA-directed RNA polymerase subunit delta of Bacillus cereus (strain AH187).